The primary structure comprises 2969 residues: Histone-lysine N-methyltransferase ASH1L (2969 aa).

Disordered regions lie at residues 1–70 (MDPR…TDAQ) and 118–143 (HPRK…RDPS). A compositionally biased stretch (polar residues) spans 21–31 (KSPSAISTGTL). Phosphoserine is present on Ser22. Basic and acidic residues-rich tracts occupy residues 33–65 (SKRE…KDDG) and 127–143 (KMTD…RDPS). A Glycyl lysine isopeptide (Lys-Gly) (interchain with G-Cter in SUMO2) cross-link involves residue Lys34. Residue Lys375 is modified to N6-acetyllysine. Lys425 is covalently cross-linked (Glycyl lysine isopeptide (Lys-Gly) (interchain with G-Cter in SUMO2)). Positions 501–511 (IQQDSFSSSEK) are enriched in polar residues. 7 disordered regions span residues 501–525 (IQQD…QPPV), 537–583 (ASDV…PNPL), 824–845 (YKPK…PPKR), 878–966 (KQGL…EMEP), 1100–1128 (SEIL…AGFV), 1151–1231 (MKKA…EHVS), and 1243–1281 (SLKE…QLRN). A compositionally biased stretch (basic and acidic residues) spans 512–522 (GSYETSKHEKQ). The segment covering 554–579 (NLPSPSPTVSVNPLTRSPPETSSQLA) has biased composition (polar residues). The segment covering 887–897 (PKKRGRPKRQM) has biased composition (basic residues). The segment at residues 887–899 (PKKRGRPKRQMRS) is a DNA-binding region (a.T hook 1). The segment covering 920-932 (SKLESESDNHRSS) has biased composition (basic and acidic residues). Acidic residues predominate over residues 936-949 (FESEDQLQDPDDLD). Low complexity-rich tracts occupy residues 1100–1123 (SEIL…PVSS) and 1162–1175 (SPPT…SHLS). Phosphoserine is present on residues Ser1162 and Ser1170. Residues 1186–1211 (SPISESHSDETIPSDSGIGTDNNSTS) are compositionally biased toward polar residues. Gln1220 is subject to N5-methylglutamine. Composition is skewed to basic residues over residues 1246–1256 (EKHKHKCKRRN) and 1266–1277 (KRQKRKRKKKYP). The segment at residues 1347 to 1359 (KKKRGRPPKMREA) is a DNA-binding region (a.T hook 2). Disordered stretches follow at residues 1489-1508 (HREH…GSSR), 1580-1711 (SESS…ASGD), and 1741-1761 (ASAP…TLGK). 4 stretches are compositionally biased toward polar residues: residues 1496–1508 (EQPQ…GSSR), 1580–1598 (SESS…SEPA), 1605–1622 (NLFT…PNSS), and 1650–1680 (LPSN…STNC). Residues 1741–1751 (ASAPPSSSPGR) are compositionally biased toward low complexity. The segment at residues 1847-1859 (KRRPGRPRKCPLQ) is a DNA-binding region (a.T hook 3). The tract at residues 1911–1991 (KKGLKRKGWL…PRPPKKKYQK (81 aa)) is disordered. Positions 2069 to 2288 (PDVPLYKKIR…KCRGIIGGKS (220 aa)) are catalytic domain. The 52-residue stretch at 2091–2142 (YEATTCNCKKPDDDTRKGCVDDCLNRMIFAECSPNTCPCGEQCCNQRIQRHE) folds into the AWS domain. In terms of domain architecture, SET spans 2145–2261 (QCLERFRAEE…AGTELTYDYN (117 aa)). Positions 2269–2285 (KQQLCKCGFEKCRGIIG) constitute a Post-SET domain. Residues 2288–2346 (SQRVNGLTSSKNSQPMATHKKSGRSKEKRKSKHKLKKRRGHLSEEPSENINTPTRLTPQ) are disordered. The span at 2289 to 2303 (QRVNGLTSSKNSQPM) shows a compositional bias: polar residues. The span at 2305–2327 (THKKSGRSKEKRKSKHKLKKRRG) shows a compositional bias: basic residues. An N6-acetyllysine mark is found at Lys2317, Lys2319, and Lys2323. Positions 2335 to 2346 (ENINTPTRLTPQ) are enriched in polar residues. The 107-residue stretch at 2444–2550 (RLAQIFKEIC…KAYYNARHEA (107 aa)) folds into the Bromo domain. The segment at 2585–2631 (VIRCICGLYKDEGLMIQCDKCMVWQHCDCMGVNSDVEHYLCEQCDPR) adopts a PHD-type zinc-finger fold. Residues 2661–2798 (LLLRQGDCVY…KSAHLFYKIH (138 aa)) enclose the BAH domain. 2 disordered regions span residues 2825 to 2856 (SPHY…DLGQ) and 2876 to 2919 (NEIP…RRHN). A compositionally biased stretch (basic and acidic residues) spans 2842 to 2855 (WKSERSKPPLKDLG).

Belongs to the class V-like SAM-binding methyltransferase superfamily. Histone-lysine methyltransferase family. SET2 subfamily. In terms of processing, methylated at Gln-1220 by N6AMT1. As to expression, widely expressed, with highest level in brain, heart and kidney.

It is found in the nucleus. Its subcellular location is the cell junction. The protein localises to the tight junction. It localises to the chromosome. It catalyses the reaction L-lysyl(36)-[histone H3] + 3 S-adenosyl-L-methionine = N(6),N(6),N(6)-trimethyl-L-lysyl(36)-[histone H3] + 3 S-adenosyl-L-homocysteine + 3 H(+). The enzyme catalyses L-lysyl(9)-[histone H3] + S-adenosyl-L-methionine = N(6)-methyl-L-lysyl(9)-[histone H3] + S-adenosyl-L-homocysteine + H(+). Its function is as follows. Histone methyltransferase specifically trimethylating 'Lys-36' of histone H3 forming H3K36me3. Also monomethylates 'Lys-9' of histone H3 (H3K9me1) in vitro. The physiological significance of the H3K9me1 activity is unclear. The sequence is that of Histone-lysine N-methyltransferase ASH1L (ASH1L) from Homo sapiens (Human).